We begin with the raw amino-acid sequence, 828 residues long: MKLSRRSFMKANAVAAAAAAAGLSVPGVARAVVGQQEAIKWDKAPCRFCGTGCGVLVGTQQGRVVACQGDPDAPVNRGLNCIKGYFLPKIMYGKDRLTQPMLRMKDGSYHKDGEFTPVSWEQAFDVMEEKFKTSLKEKGPEAIGMFGSGQWTIWEGYAAAKLFKAGFRSNNIDPNARHCMASAVVGFMRTFGMDEPMGCYDDIEQADAFVLWGSNMAEMHPILWSRITNRRLSDPNVKVAVLSTFQHRSFELADNGIVFTPQSDLVILNYIANYIIQNNAVNQDFFTKHVNLRKGATDIGYGLRPTHPLEKAAKNPGSDASEPMSFDEYKAFVAEYTLDKTAEMTGVPKDQLEQLAQLYADPNKRVISYWTMGFNQHTRGVWANNLVYNLHLLTGKISQPGCGPFSLTGQPSACGTAREVGTFSHRLPADMVVTNEKHRDICEKHWQIPAGTIPAKVGLHAVAQDRALKDGKLNVYWVMCNNNMQAGPNINEDRMPGWRDPRNFIIVSDPYPTVSALSADLILPTAMWVEKEGAYGNAERRTQFWRQQIKAPGEAKSDLWQLVQFSRRFKTEEVWPEALLAQKPELRGKTLYDVLFATPAVSKFPLSELKEEQLNDESRELGFYLQKGLFEEYAWFGRGHGHDLAPFDDYHNARGLRWPVVEGKETQWRYSEGNDPYVKAGEGYKFYGKPDGKAVIFALPFEPAAESPDNEYDLWLSTGRVLEHWHTGSMTRRVPELHRAFPEAVVFIHPLDAKARDLRRGDKVKVSSRRGEVISIVETRGRNRPPQGLVYMPFFDAAQLVNNLTLDATDPLSKETDFKKCAVKLAKV.

A signal peptide (tat-type signal) is located at residues 1–31; it reads MKLSRRSFMKANAVAAAAAAAGLSVPGVARA. A 4Fe-4S Mo/W bis-MGD-type domain is found at 39-95; the sequence is IKWDKAPCRFCGTGCGVLVGTQQGRVVACQGDPDAPVNRGLNCIKGYFLPKIMYGKD. 4 residues coordinate [4Fe-4S] cluster: Cys46, Cys49, Cys53, and Cys81. Residues Lys83, Gln150, Asn175, Cys179, 212 to 219, 243 to 247, 262 to 264, Met372, Gln376, Asn482, 508 to 509, Lys531, Asp558, and 718 to 727 contribute to the Mo-bis(molybdopterin guanine dinucleotide) site; these read WGSNMAEM, STFQH, QSD, SD, and TGRVLEHWHT. Residue Phe794 participates in substrate binding. Mo-bis(molybdopterin guanine dinucleotide) is bound by residues Asn802 and Lys819.

This sequence belongs to the prokaryotic molybdopterin-containing oxidoreductase family. NasA/NapA/NarB subfamily. In terms of assembly, component of the periplasmic nitrate reductase NapAB complex composed of NapA and NapB. The cofactor is [4Fe-4S] cluster. Mo-bis(molybdopterin guanine dinucleotide) is required as a cofactor. In terms of processing, predicted to be exported by the Tat system. The position of the signal peptide cleavage has not been experimentally proven.

The protein localises to the periplasm. It carries out the reaction 2 Fe(II)-[cytochrome] + nitrate + 2 H(+) = 2 Fe(III)-[cytochrome] + nitrite + H2O. In terms of biological role, catalytic subunit of the periplasmic nitrate reductase complex NapAB. Receives electrons from NapB and catalyzes the reduction of nitrate to nitrite. This is Periplasmic nitrate reductase from Salmonella schwarzengrund (strain CVM19633).